A 305-amino-acid polypeptide reads, in one-letter code: Glycine--tRNA ligase alpha subunit (305 aa).

Belongs to the class-II aminoacyl-tRNA synthetase family. In terms of assembly, tetramer of two alpha and two beta subunits.

It localises to the cytoplasm. It catalyses the reaction tRNA(Gly) + glycine + ATP = glycyl-tRNA(Gly) + AMP + diphosphate. This Streptococcus pyogenes serotype M12 (strain MGAS2096) protein is Glycine--tRNA ligase alpha subunit.